The chain runs to 93 residues: uncharacterized protein (93 aa).

Residues 41-62 are disordered; it reads RSANRIPTTSSTSTSGTIPTTT. Over residues 46–62 the composition is skewed to low complexity; sequence IPTTSSTSTSGTIPTTT.

This is an uncharacterized protein from Dictyostelium discoideum (Social amoeba).